The sequence spans 795 residues: MATMLEGRCQTQPRSSPSGREASLWSSGFGMKLEAVTPFLGKYRPFVGRCCQTCTPKSWESLFHRSITDLGFCNVILVKEENTRFRGWLVRRLCYFLWSLEQHIPPCQDVPQKIMESTGVQNLLSGRVPGGTGEGQVPDLVKKEVQRILGHIQAPPRPFLVRLFSWALLRFLNCLFLNVQLHKGQMKMVQKAAQAGLPLVLLSTHKTLLDGILLPFMLLSQGLGVLRVAWDSRACSPALRALLRKLGGLFLPPEASLSLDSSEGLLARAVVQAVIEQLLVSGQPLLIFLEEPPGALGPRLSALGQAWVGFVVQAVQVGIVPDALLVPVAVTYDLVPDAPCDIDHASAPLGLWTGALAVLRSLWSRWGCSHRICSRVHLAQPFSLQEYIVSARSCWGGRQTLEQLLQPIVLGQCTAVPDTEKEQEWTPITGPLLALKEEDQLLVRRLSCHVLSASVGSSAVMSTAIMATLLLFKHQKLLGEFSWLTEEILLRGFDVGFSGQLRSLLQHSLSLLRAHVALLRIRQGDLLVVPQPGPGLTHLAQLSAELLPVFLSEAVGACAVRGLLAGRVPPQGPWELQGILLLSQNELYRQILLLMHLLPQDLLLLKPCQSSYCYCQEVLDRLIQCGLLVAEETPGSRPACDTGRQRLSRKLLWKPSGDFTDSDSDDFGEADGRYFRLSQQSHCPDFFLFLCRLLSPLLKAFAQAAAFLRQGQLPDTELGYTEQLFQFLQATAQEEGIFECADPKLAISAVWTFRDLGVLQQTPSPAGPRLHLSPTFASLDNQEKLEQFIRQFICS.

A disordered region spans residues M1 to E21. At M1 to Q305 the chain is on the cytoplasmic side. Residues C9–S18 are compositionally biased toward polar residues. The tract at residues Q180 to T331 is acyltransferase. The HXXXXD motif signature appears at H205 to D210. The helical transmembrane segment at A306–Y332 threads the bilayer. The Mitochondrial intermembrane segment spans residues D333–H449. A helical membrane pass occupies residues V450–F472. Over K473–S795 the chain is Cytoplasmic. S656 is modified (phosphoserine). T660 is modified (phosphothreonine). Phosphoserine occurs at positions 662 and 664.

This sequence belongs to the GPAT/DAPAT family. Interacts with PIWIL2.

It is found in the mitochondrion outer membrane. The catalysed reaction is sn-glycerol 3-phosphate + an acyl-CoA = a 1-acyl-sn-glycero-3-phosphate + CoA. It carries out the reaction a 1-acyl-sn-glycero-3-phosphate + an acyl-CoA = a 1,2-diacyl-sn-glycero-3-phosphate + CoA. The enzyme catalyses 1-(9Z-octadecenoyl)-sn-glycero-3-phosphate + (9Z)-octadecenoyl-CoA = 1,2-di-(9Z-octadecenoyl)-sn-glycero-3-phosphate + CoA. It catalyses the reaction 1-(9Z-octadecenoyl)-sn-glycero-3-phosphate + (5Z,8Z,11Z,14Z)-eicosatetraenoyl-CoA = 1-(9Z)-octadecenoyl-2-(5Z,8Z,11Z,14Z)-eicosatetraenoyl-sn-glycero-3-phosphate + CoA. The catalysed reaction is (5Z,8Z,11Z,14Z)-eicosatetraenoyl-CoA + sn-glycerol 3-phosphate = 1-(5Z,8Z,11Z,14Z-eicosatetraenoyl)-sn-glycero-3-phosphate + CoA. It functions in the pathway phospholipid metabolism; CDP-diacylglycerol biosynthesis; CDP-diacylglycerol from sn-glycerol 3-phosphate: step 1/3. Inhibited by N-ethylmaleimide (NEM). Functionally, transfers an acyl-group from acyl-ACP to the sn-1 position of glycerol-3-phosphate producing a lysophosphatidic acid (LPA), an essential step for the triacylglycerol (TAG) and glycerophospholipids. In vitro also transfers an acyl-group from acyl-ACP to the LPA producing a phosphatidic acid (PA). Prefers arachidonoyl-CoA as the acyl donor. Required for primary processing step during piRNA biosynthesis. Molecular mechanisms by which it promotes piRNA biosynthesis are unclear and do not involve its acyltransferase activity. This Homo sapiens (Human) protein is Glycerol-3-phosphate acyltransferase 2, mitochondrial.